The primary structure comprises 235 residues: Leucyl/phenylalanyl-tRNA--protein transferase (235 aa).

The protein belongs to the L/F-transferase family.

It localises to the cytoplasm. It carries out the reaction N-terminal L-lysyl-[protein] + L-leucyl-tRNA(Leu) = N-terminal L-leucyl-L-lysyl-[protein] + tRNA(Leu) + H(+). The enzyme catalyses N-terminal L-arginyl-[protein] + L-leucyl-tRNA(Leu) = N-terminal L-leucyl-L-arginyl-[protein] + tRNA(Leu) + H(+). The catalysed reaction is L-phenylalanyl-tRNA(Phe) + an N-terminal L-alpha-aminoacyl-[protein] = an N-terminal L-phenylalanyl-L-alpha-aminoacyl-[protein] + tRNA(Phe). Its function is as follows. Functions in the N-end rule pathway of protein degradation where it conjugates Leu, Phe and, less efficiently, Met from aminoacyl-tRNAs to the N-termini of proteins containing an N-terminal arginine or lysine. This is Leucyl/phenylalanyl-tRNA--protein transferase from Magnetococcus marinus (strain ATCC BAA-1437 / JCM 17883 / MC-1).